A 261-amino-acid polypeptide reads, in one-letter code: Ribosome biogenesis protein nsa2 (261 aa).

Basic and acidic residues-rich tracts occupy residues 1 to 36 (MPQNEYIERAQKLHGKRLDTEERARKKAAREGHKQS) and 66 to 82 (KQHEERNVKGAPEEKDP). Disordered regions lie at residues 1–44 (MPQN…NLRG) and 64–97 (AIKQHEERNVKGAPEEKDPSNPVPAYLLDRSNPT). Residues 15–22 (GKRLDTEE) carry the Nuclear localization signal motif.

The protein belongs to the eukaryotic ribosomal protein eS8 family. Ribosome biogenesis protein NSA2 subfamily. As to quaternary structure, component of the pre-66S ribosomal particle. Interacts with nop7 and rrp1. Interacts with rsa4 (via WD repeats).

The protein localises to the nucleus. The protein resides in the nucleolus. Functionally, involved in the biogenesis of the 60S ribosomal subunit. May play a part in the quality control of pre-60S particles. The sequence is that of Ribosome biogenesis protein nsa2 (rbg-52) from Neurospora crassa (strain ATCC 24698 / 74-OR23-1A / CBS 708.71 / DSM 1257 / FGSC 987).